The chain runs to 553 residues: Dihydroxy-acid dehydratase (553 aa).

A Mg(2+)-binding site is contributed by Asp78. Cys119 contributes to the [2Fe-2S] cluster binding site. Mg(2+)-binding residues include Asp120 and Lys121. Lys121 is modified (N6-carboxylysine). [2Fe-2S] cluster is bound at residue Cys192. Glu442 is a Mg(2+) binding site. Catalysis depends on Ser468, which acts as the Proton acceptor.

The protein belongs to the IlvD/Edd family. As to quaternary structure, homodimer. The cofactor is [2Fe-2S] cluster. Mg(2+) serves as cofactor.

It carries out the reaction (2R)-2,3-dihydroxy-3-methylbutanoate = 3-methyl-2-oxobutanoate + H2O. The catalysed reaction is (2R,3R)-2,3-dihydroxy-3-methylpentanoate = (S)-3-methyl-2-oxopentanoate + H2O. The protein operates within amino-acid biosynthesis; L-isoleucine biosynthesis; L-isoleucine from 2-oxobutanoate: step 3/4. Its pathway is amino-acid biosynthesis; L-valine biosynthesis; L-valine from pyruvate: step 3/4. In terms of biological role, functions in the biosynthesis of branched-chain amino acids. Catalyzes the dehydration of (2R,3R)-2,3-dihydroxy-3-methylpentanoate (2,3-dihydroxy-3-methylvalerate) into 2-oxo-3-methylpentanoate (2-oxo-3-methylvalerate) and of (2R)-2,3-dihydroxy-3-methylbutanoate (2,3-dihydroxyisovalerate) into 2-oxo-3-methylbutanoate (2-oxoisovalerate), the penultimate precursor to L-isoleucine and L-valine, respectively. This chain is Dihydroxy-acid dehydratase, found in Campylobacter hominis (strain ATCC BAA-381 / DSM 21671 / CCUG 45161 / LMG 19568 / NCTC 13146 / CH001A).